We begin with the raw amino-acid sequence, 195 residues long: Alkyl hydroperoxide reductase C (195 aa).

Residues 4 to 170 (LTIGDQFPEY…VLRVLDALQS (167 aa)) enclose the Thioredoxin domain. K41 is covalently cross-linked (Isoglutamyl lysine isopeptide (Lys-Gln) (interchain with Q-Cter in protein Pup)). Residue C61 is the Cysteine sulfenic acid (-SOH) intermediate of the active site.

The protein belongs to the peroxiredoxin family. AhpC/Prx1 subfamily. In terms of assembly, homodimer; disulfide-linked, upon oxidation. 6 homodimers assemble to form a ring-like dodecamer. Identified in a complex with AhpD, DlaT and Lpd.

Its subcellular location is the cytoplasm. It carries out the reaction N(6)-[(R)-dihydrolipoyl]-L-lysyl-[lipoyl-carrier protein] + a hydroperoxide = N(6)-[(R)-lipoyl]-L-lysyl-[lipoyl-carrier protein] + an alcohol + H2O. Thiol-specific peroxidase that catalyzes the reduction of hydrogen peroxide and organic hydroperoxides to water and alcohols, respectively. Plays a role in cell protection against oxidative stress by detoxifying peroxides. Together with AhpD, DlaT and Lpd, constitutes an NADH-dependent peroxidase active against hydrogen and alkyl peroxides as well as serving as a peroxynitrite reductase, thus protecting the bacterium against reactive nitrogen intermediates and oxidative stress generated by the host immune system. Does not however seem to play a role in detoxification of isoniazid. The protein is Alkyl hydroperoxide reductase C of Mycolicibacterium smegmatis (strain ATCC 700084 / mc(2)155) (Mycobacterium smegmatis).